We begin with the raw amino-acid sequence, 258 residues long: Ribonuclease HII (258 aa).

One can recognise an RNase H type-2 domain in the interval 71-258 (ELIAGIDEVG…PIKSMVNFKY (188 aa)). A divalent metal cation contacts are provided by Asp-77, Glu-78, and Asp-169.

This sequence belongs to the RNase HII family. Mn(2+) is required as a cofactor. Mg(2+) serves as cofactor.

The protein localises to the cytoplasm. It catalyses the reaction Endonucleolytic cleavage to 5'-phosphomonoester.. Endonuclease that specifically degrades the RNA of RNA-DNA hybrids. The sequence is that of Ribonuclease HII from Lactococcus lactis subsp. cremoris (strain SK11).